The following is a 236-amino-acid chain: uncharacterized protein (236 aa).

Its subcellular location is the plastid. It is found in the chloroplast. This is an uncharacterized protein from Chlorella vulgaris (Green alga).